A 230-amino-acid chain; its full sequence is Ribosomal RNA small subunit methyltransferase I (230 aa).

This sequence belongs to the methyltransferase superfamily. RsmI family.

The protein localises to the cytoplasm. The catalysed reaction is cytidine(1402) in 16S rRNA + S-adenosyl-L-methionine = 2'-O-methylcytidine(1402) in 16S rRNA + S-adenosyl-L-homocysteine + H(+). In terms of biological role, catalyzes the 2'-O-methylation of the ribose of cytidine 1402 (C1402) in 16S rRNA. The chain is Ribosomal RNA small subunit methyltransferase I from Hydrogenobaculum sp. (strain Y04AAS1).